The following is a 577-amino-acid chain: Anthranilate synthase alpha subunit 1, chloroplastic (577 aa).

The N-terminal 34 residues, 1-34, are a transit peptide targeting the chloroplast; the sequence is MASLVLSLRIAPSTPPLGLGGGRFRGRRGAVACR.

It belongs to the anthranilate synthase component I family. As to quaternary structure, heterotetramer consisting of two non-identical subunits: a beta subunit and a large alpha subunit.

The protein localises to the plastid. It is found in the chloroplast. It catalyses the reaction chorismate + L-glutamine = anthranilate + pyruvate + L-glutamate + H(+). Its pathway is amino-acid biosynthesis; L-tryptophan biosynthesis; L-tryptophan from chorismate: step 1/5. Feedback inhibition by tryptophan. In terms of biological role, part of a heterotetrameric complex that catalyzes the two-step biosynthesis of anthranilate, an intermediate in the biosynthesis of L-tryptophan. In the first step, the glutamine-binding beta subunit of anthranilate synthase (AS) provides the glutamine amidotransferase activity which generates ammonia as a substrate that, along with chorismate, is used in the second step, catalyzed by the large alpha subunit of AS to produce anthranilate. The polypeptide is Anthranilate synthase alpha subunit 1, chloroplastic (Oryza sativa subsp. japonica (Rice)).